A 567-amino-acid polypeptide reads, in one-letter code: Glutamate--tRNA ligase (567 aa).

Residues 106–116 carry the 'HIGH' region motif; sequence PNPDGPLHLGN.

The protein belongs to the class-I aminoacyl-tRNA synthetase family. Glutamate--tRNA ligase type 2 subfamily.

It is found in the cytoplasm. It catalyses the reaction tRNA(Glu) + L-glutamate + ATP = L-glutamyl-tRNA(Glu) + AMP + diphosphate. Its function is as follows. Catalyzes the attachment of glutamate to tRNA(Glu) in a two-step reaction: glutamate is first activated by ATP to form Glu-AMP and then transferred to the acceptor end of tRNA(Glu). The polypeptide is Glutamate--tRNA ligase (Sulfolobus acidocaldarius (strain ATCC 33909 / DSM 639 / JCM 8929 / NBRC 15157 / NCIMB 11770)).